Reading from the N-terminus, the 122-residue chain is Probable F-box protein At4g23960 (122 aa).

Positions 1–45 (MIEQLFPEVTCYALRYLDYSSLCQLSMTSSSMRKTANDDVLWRAL) constitute an F-box domain.

This chain is Probable F-box protein At4g23960, found in Arabidopsis thaliana (Mouse-ear cress).